The primary structure comprises 159 residues: Large ribosomal subunit protein uL15 (159 aa).

Positions 1–13 (MRLNELRDNDGAT) are enriched in basic and acidic residues. The tract at residues 1 to 41 (MRLNELRDNDGATKIRTRVGRGIGSGKGKTGGRGVKGQKSR) is disordered. Residues 21-35 (RGIGSGKGKTGGRGV) show a composition bias toward gly residues.

Belongs to the universal ribosomal protein uL15 family. As to quaternary structure, part of the 50S ribosomal subunit.

Binds to the 23S rRNA. This is Large ribosomal subunit protein uL15 from Maricaulis maris (strain MCS10) (Caulobacter maris).